The following is a 660-amino-acid chain: Zeaxanthin epoxidase, chloroplastic (660 aa).

The transit peptide at 1–49 (MYASSARDGIPGKWCNARRKQLPLLISKDFPAELYHSLPCKSLENGHIK) directs the protein to the chloroplast. Residues 79-107 (KVLV…LVFE) and 357-370 (TFSW…LLGD) each bind FAD. One can recognise an FHA domain in the interval 545-609 (LVLSRDENMP…HGTWFIDNEG (65 aa)).

It depends on FAD as a cofactor.

It is found in the plastid. The protein resides in the chloroplast membrane. Its subcellular location is the chloroplast thylakoid membrane. It catalyses the reaction all-trans-zeaxanthin + 4 reduced [2Fe-2S]-[ferredoxin] + 2 O2 + 4 H(+) = all-trans-violaxanthin + 4 oxidized [2Fe-2S]-[ferredoxin] + 2 H2O. It carries out the reaction all-trans-zeaxanthin + 2 reduced [2Fe-2S]-[ferredoxin] + O2 + 2 H(+) = all-trans-antheraxanthin + 2 oxidized [2Fe-2S]-[ferredoxin] + H2O. The enzyme catalyses all-trans-antheraxanthin + 2 reduced [2Fe-2S]-[ferredoxin] + O2 + 2 H(+) = all-trans-violaxanthin + 2 oxidized [2Fe-2S]-[ferredoxin] + H2O. The catalysed reaction is beta-cryptoxanthin + 2 reduced [2Fe-2S]-[ferredoxin] + O2 + 2 H(+) = (5R,6S)-5,6-epoxi-beta-cryptoxanthin + 2 oxidized [2Fe-2S]-[ferredoxin] + H2O. It functions in the pathway plant hormone biosynthesis; abscisate biosynthesis. Converts zeaxanthin into antheraxanthin and subsequently violaxanthin. Also acts on beta-cryptoxanthin. Involved in the epoxidation of zeaxanthin. The chain is Zeaxanthin epoxidase, chloroplastic from Capsicum annuum (Capsicum pepper).